The chain runs to 732 residues: X-ray repair cross-complementing protein 5 (732 aa).

The VWFA domain occupies 9-161 (AVVLCVDVGV…CNLKKSGISL (153 aa)). The leucine-zipper stretch occupies residues 138-165 (LSSPFSQDQLDVIICNLKKSGISLQFFL). Residue Lys195 forms a Glycyl lysine isopeptide (Lys-Gly) (interchain with G-Cter in SUMO2) linkage. Positions 253 to 453 (IGPNLSIKIV…CTPTEAQLSA (201 aa)) constitute a Ku domain. Ser258 bears the Phosphoserine mark. Position 265 is an N6-acetyllysine (Lys265). A Phosphoserine modification is found at Ser318. Lys332 carries the post-translational modification N6-acetyllysine. Glycyl lysine isopeptide (Lys-Gly) (interchain with G-Cter in SUMO2) cross-links involve residues Lys532 and Lys534. Thr535 is modified (phosphothreonine). Residues Lys567 and Lys569 each participate in a glycyl lysine isopeptide (Lys-Gly) (interchain with G-Cter in SUMO2) cross-link. Phosphoserine; by PRKDC occurs at positions 578, 580, and 581. Position 666 is an N6-acetyllysine (Lys666). Residues Lys670 and Lys689 each participate in a glycyl lysine isopeptide (Lys-Gly) (interchain with G-Cter in SUMO2) cross-link. A disordered region spans residues 708–732 (PKDKAKEDTTGPEEAGDVDDLLDMI). Thr716 is modified (phosphothreonine; by PRKDC). Over residues 717–732 (TGPEEAGDVDDLLDMI) the composition is skewed to acidic residues. The EEXXXDL motif signature appears at 720 to 728 (EEAGDVDDL).

It belongs to the ku80 family. As to quaternary structure, heterodimer composed of XRCC5/Ku80 and XRCC6/Ku70. Component of the core long-range non-homologous end joining (NHEJ) complex (also named DNA-PK complex) composed of PRKDC, LIG4, XRCC4, XRCC6/Ku70, XRCC5/Ku86 and NHEJ1/XLF. Additional component of the NHEJ complex includes PAXX. Following autophosphorylation, PRKDC dissociates from DNA, leading to formation of the short-range NHEJ complex, composed of LIG4, XRCC4, XRCC6/Ku70, XRCC5/Ku86 and NHEJ1/XLF. The XRCC5-XRCC6 dimer also associates with NAA15, and this complex displays DNA binding activity towards the osteocalcin FGF response element (OCFRE). In addition, XRCC5 binds to the osteoblast-specific transcription factors MSX2 and RUNX2. Interacts with ELF3. Interacts with APLF (via KBM motif). The XRCC5/XRCC6 dimer associates in a DNA-dependent manner with APEX1. Identified in a complex with DEAF1 and XRCC6. Interacts with NR4A3; the DNA-dependent protein kinase complex DNA-PK phosphorylates and activates NR4A3 and prevents NR4A3 ubiquitinylation and degradation. Interacts with RNF138. Interacts with CYREN (via KBM motif). Interacts with WRN (via KBM motif). Interacts (via N-terminus) with HSF1 (via N-terminus); this interaction is direct and prevents XRCC5/XRCC6 heterodimeric binding and non-homologous end joining (NHEJ) repair activities induced by ionizing radiation (IR). Interacts with DHX9; this interaction occurs in a RNA-dependent manner. Part of the HDP-RNP complex composed of at least HEXIM1, PRKDC, XRCC5, XRCC6, paraspeckle proteins (SFPQ, NONO, PSPC1, RBM14, and MATR3) and NEAT1 RNA. Interacts with ERCC6. Interacts with ATF7. The XRCC5-XRCC6 dimer associates with ALKBH2. Interacts with TPRN; TPRN interacts with a number of DNA damage response proteins, is recruited to sites of DNA damage and may play a role in DNA damage repair. Interacts with ERCC6L2. Post-translationally, ADP-ribosylated by PARP3. In terms of processing, phosphorylated on serine residues. Phosphorylation by PRKDC may enhance helicase activity. Sumoylated. Post-translationally, ubiquitinated by RNF8 via 'Lys-48'-linked ubiquitination following DNA damage, leading to its degradation and removal from DNA damage sites. Ubiquitinated by RNF138, leading to remove the Ku complex from DNA breaks.

Its subcellular location is the nucleus. It is found in the nucleolus. The protein localises to the chromosome. Single-stranded DNA-dependent ATP-dependent helicase that plays a key role in DNA non-homologous end joining (NHEJ) by recruiting DNA-PK to DNA. Required for double-strand break repair and V(D)J recombination. Also has a role in chromosome translocation. The DNA helicase II complex binds preferentially to fork-like ends of double-stranded DNA in a cell cycle-dependent manner. It works in the 3'-5' direction. During NHEJ, the XRCC5-XRRC6 dimer performs the recognition step: it recognizes and binds to the broken ends of the DNA and protects them from further resection. Binding to DNA may be mediated by XRCC6. The XRCC5-XRRC6 dimer acts as a regulatory subunit of the DNA-dependent protein kinase complex DNA-PK by increasing the affinity of the catalytic subunit PRKDC to DNA by 100-fold. The XRCC5-XRRC6 dimer is probably involved in stabilizing broken DNA ends and bringing them together. The assembly of the DNA-PK complex to DNA ends is required for the NHEJ ligation step. The XRCC5-XRRC6 dimer probably also acts as a 5'-deoxyribose-5-phosphate lyase (5'-dRP lyase), by catalyzing the beta-elimination of the 5' deoxyribose-5-phosphate at an abasic site near double-strand breaks. XRCC5 probably acts as the catalytic subunit of 5'-dRP activity, and allows to 'clean' the termini of abasic sites, a class of nucleotide damage commonly associated with strand breaks, before such broken ends can be joined. The XRCC5-XRRC6 dimer together with APEX1 acts as a negative regulator of transcription. In association with NAA15, the XRCC5-XRRC6 dimer binds to the osteocalcin promoter and activates osteocalcin expression. As part of the DNA-PK complex, involved in the early steps of ribosome assembly by promoting the processing of precursor rRNA into mature 18S rRNA in the small-subunit processome. Binding to U3 small nucleolar RNA, recruits PRKDC and XRCC5/Ku86 to the small-subunit processome. Plays a role in the regulation of DNA virus-mediated innate immune response by assembling into the HDP-RNP complex, a complex that serves as a platform for IRF3 phosphorylation and subsequent innate immune response activation through the cGAS-STING pathway. This Mus musculus (Mouse) protein is X-ray repair cross-complementing protein 5 (Xrcc5).